The primary structure comprises 353 residues: Quinolinate synthase (353 aa).

Iminosuccinate-binding residues include His-47 and Ser-68. Cys-113 serves as a coordination point for [4Fe-4S] cluster. Residues Tyr-139 to Asn-141 and Ser-156 each bind iminosuccinate. Cys-200 provides a ligand contact to [4Fe-4S] cluster. Residues His-226–Glu-228 and Thr-243 each bind iminosuccinate. Residue Cys-297 participates in [4Fe-4S] cluster binding.

The protein belongs to the quinolinate synthase family. Type 1 subfamily. The cofactor is [4Fe-4S] cluster.

It localises to the cytoplasm. It carries out the reaction iminosuccinate + dihydroxyacetone phosphate = quinolinate + phosphate + 2 H2O + H(+). Its pathway is cofactor biosynthesis; NAD(+) biosynthesis; quinolinate from iminoaspartate: step 1/1. Catalyzes the condensation of iminoaspartate with dihydroxyacetone phosphate to form quinolinate. This Vibrio parahaemolyticus serotype O3:K6 (strain RIMD 2210633) protein is Quinolinate synthase.